The primary structure comprises 363 residues: Flagellar P-ring protein (363 aa).

An N-terminal signal peptide occupies residues 1-20; the sequence is MKKFTLLLLCFVLPMTSAYA.

It belongs to the FlgI family. In terms of assembly, the basal body constitutes a major portion of the flagellar organelle and consists of four rings (L,P,S, and M) mounted on a central rod.

Its subcellular location is the periplasm. The protein localises to the bacterial flagellum basal body. In terms of biological role, assembles around the rod to form the L-ring and probably protects the motor/basal body from shearing forces during rotation. The sequence is that of Flagellar P-ring protein from Vibrio vulnificus (strain YJ016).